The primary structure comprises 339 residues: Adenylosuccinate synthetase (339 aa).

GTP contacts are provided by residues 12-18 and 42-44; these read GDEGKGS and GHS. The Proton acceptor role is filled by Asp13. Residues Asp13 and Gly42 each coordinate Mg(2+). IMP-binding positions include 13-16, 40-43, Thr127, Arg141, Gln179, Thr194, and Arg256; these read DEGK and NAGH. His43 functions as the Proton donor in the catalytic mechanism. 252–258 lines the substrate pocket; the sequence is TVTGRRR. Residues Arg258, 284 to 286, and 324 to 326 contribute to the GTP site; these read MLD and KTG.

It belongs to the adenylosuccinate synthetase family. In terms of assembly, homodimer. Mg(2+) serves as cofactor.

Its subcellular location is the cytoplasm. The enzyme catalyses IMP + L-aspartate + GTP = N(6)-(1,2-dicarboxyethyl)-AMP + GDP + phosphate + 2 H(+). The protein operates within purine metabolism; AMP biosynthesis via de novo pathway; AMP from IMP: step 1/2. In terms of biological role, plays an important role in the de novo pathway of purine nucleotide biosynthesis. Catalyzes the first committed step in the biosynthesis of AMP from IMP. The polypeptide is Adenylosuccinate synthetase (Thermococcus sibiricus (strain DSM 12597 / MM 739)).